The following is a 359-amino-acid chain: 3-isopropylmalate dehydrogenase (359 aa).

77–88 contacts NAD(+); the sequence is GPKWGTGDVRPE. Substrate contacts are provided by R95, R105, R134, and D223. D223, D248, and D252 together coordinate Mg(2+). Position 287–298 (287–298) interacts with NAD(+); it reads GSAPDLPAGKVN.

This sequence belongs to the isocitrate and isopropylmalate dehydrogenases family. In terms of assembly, homodimer. Mg(2+) is required as a cofactor. Requires Mn(2+) as cofactor.

Its subcellular location is the cytoplasm. The enzyme catalyses (2R,3S)-3-isopropylmalate + NAD(+) = 4-methyl-2-oxopentanoate + CO2 + NADH. It participates in amino-acid biosynthesis; L-leucine biosynthesis; L-leucine from 3-methyl-2-oxobutanoate: step 3/4. Catalyzes the oxidation of 3-carboxy-2-hydroxy-4-methylpentanoate (3-isopropylmalate) to 3-carboxy-4-methyl-2-oxopentanoate. The product decarboxylates to 4-methyl-2 oxopentanoate. This Diutina rugosa (Yeast) protein is 3-isopropylmalate dehydrogenase (LEU2).